The primary structure comprises 493 residues: Monodehydroascorbate reductase, chloroplastic/mitochondrial (493 aa).

The N-terminal 51 residues, 1–51 (MSAVRRVMALASTTLPTKSGLSLWCPSSPSLARRFPARFSPIGSRIASRSL), are a transit peptide targeting the chloroplast and mitochondrion. Residues 68–71 (GGNA), Glu95, Arg102, Lys107, and 201–202 (RE) each bind FAD. Residues 224 to 230 (GGYIGME), Glu248, Arg254, and Gly313 contribute to the NAD(+) site. Residue 226-230 (YIGME) coordinates NADP(+). NADP(+) is bound by residues Arg254 and Gly313. FAD is bound at residue Asp351. 367–368 (EH) contributes to the NAD(+) binding site. 367-368 (EH) contributes to the NADP(+) binding site. An FAD-binding site is contributed by Val369. Arg373 provides a ligand contact to L-ascorbate. Tyr398 is a binding site for FAD. Tyr398 is an NAD(+) binding site. Tyr398 contributes to the NADP(+) binding site. Arg400 is a binding site for L-ascorbate.

Belongs to the FAD-dependent oxidoreductase family. Interacts in vitro with TRXy. The cofactor is FAD.

The protein resides in the plastid. Its subcellular location is the chloroplast. The protein localises to the mitochondrion. It catalyses the reaction 2 monodehydro-L-ascorbate radical + NADH + H(+) = 2 L-ascorbate + NAD(+). The catalysed reaction is 2,4,6-trinitrotoluene + NADH = 2,4,6-trinitrotoluene radical + e(-) + NAD(+). Its activity is regulated as follows. Redox regulation of the activity by thioredoxin TRXy1. Functionally, catalyzes the conversion of monodehydroascorbate (MDA) to ascorbate, oxidizing NADH in the process. Mediates phytotoxicity of 2,4,6-trinitrotoluene (TNT), an explosive and environmental pollutant, by reducing TNT and forming a nitro radical that spontaneously reacts with atmospheric oxygen, generating reactive superoxide. Can also use 1-chloro-2,4-dinitrobenzene (CDNB) as substrate, but not 1-chloro-4-nitrobenzene (CNB). This chain is Monodehydroascorbate reductase, chloroplastic/mitochondrial, found in Arabidopsis thaliana (Mouse-ear cress).